Consider the following 458-residue polypeptide: Elongation factor 1-alpha (458 aa).

Residue Gly-2 is modified to N,N,N-trimethylglycine. Lys-3 carries the N6,N6-dimethyllysine; alternate modification. N6-methyllysine; alternate is present on Lys-3. Residues 5-240 (KTHVNVVVIG…DAIEPPVRPS (236 aa)) form the tr-type G domain. The interval 14–21 (GHVDSGKS) is G1. Position 14–21 (14–21 (GHVDSGKS)) interacts with GTP. Lys-30 is modified (N6-methyllysine). Residues 70–74 (GITID) form a G2 region. An N6,N6,N6-trimethyllysine modification is found at Lys-79. Residues 91–94 (DAPG) are G3. Residues 91-95 (DAPGH) and 153-156 (NKMD) each bind GTP. Residues 153 to 156 (NKMD) form a G4 region. The segment at 192 to 194 (SGW) is G5. N6,N6-dimethyllysine; alternate is present on Lys-316. Lys-316 is subject to N6-methyllysine; alternate. N6-methyllysine is present on Lys-390.

This sequence belongs to the TRAFAC class translation factor GTPase superfamily. Classic translation factor GTPase family. EF-Tu/EF-1A subfamily.

It localises to the cytoplasm. In terms of biological role, this protein promotes the GTP-dependent binding of aminoacyl-tRNA to the A-site of ribosomes during protein biosynthesis. The protein is Elongation factor 1-alpha (TEF-2) of Mucor circinelloides f. lusitanicus (Mucor racemosus var. lusitanicus).